The following is a 246-amino-acid chain: ABC transporter ATP-binding protein NatA (246 aa).

Residues 2-237 (ITLTDCSRRF…ERSEDLNYIF (236 aa)) form the ABC transporter domain. 38-45 (GENGAGKT) contacts ATP.

The protein belongs to the ABC transporter superfamily. As to quaternary structure, the complex is composed of NatA and NatB.

The enzyme catalyses Na(+)(in) + ATP + H2O = Na(+)(out) + ADP + phosphate + H(+). In terms of biological role, part of an ABC transporter that catalyzes ATP-dependent electrogenic sodium extrusion. This chain is ABC transporter ATP-binding protein NatA, found in Bacillus subtilis (strain 168).